An 87-amino-acid chain; its full sequence is Bombyxin B-10 (87 aa).

Positions 1-19 are cleaved as a signal peptide; sequence MKTILIFLVVISLMYSGEA. 3 disulfide bridges follow: Cys-27–Cys-73, Cys-39–Cys-86, and Cys-72–Cys-77. Positions 46–64 are cleaved as a propeptide — bombyxin B-10 C peptide; that stretch reads SGAQYAPYFWTRQYLGSRG.

This sequence belongs to the insulin family. In terms of assembly, heterodimer of a B chain and an A chain linked by two disulfide bonds.

It localises to the secreted. Brain peptide responsible for activation of prothoracic glands to produce ecdysone in insects. The polypeptide is Bombyxin B-10 (BBXB10) (Bombyx mori (Silk moth)).